The following is a 199-amino-acid chain: Ribonuclease HII (199 aa).

Residues 10-199 (HLVAGVDEVG…VKRALGLASN (190 aa)) enclose the RNase H type-2 domain. Residues Asp-16, Glu-17, and Asp-108 each coordinate a divalent metal cation.

This sequence belongs to the RNase HII family. Requires Mn(2+) as cofactor. Mg(2+) serves as cofactor.

The protein localises to the cytoplasm. It carries out the reaction Endonucleolytic cleavage to 5'-phosphomonoester.. Functionally, endonuclease that specifically degrades the RNA of RNA-DNA hybrids. The protein is Ribonuclease HII of Klebsiella pneumoniae subsp. pneumoniae (strain ATCC 700721 / MGH 78578).